The chain runs to 70 residues: Putative antitoxin VapB34 (70 aa).

Antitoxin component of a possible type II toxin-antitoxin (TA) system. The cognate toxin is VapC34. In Mycobacterium tuberculosis (strain CDC 1551 / Oshkosh), this protein is Putative antitoxin VapB34 (vapB34).